We begin with the raw amino-acid sequence, 357 residues long: Putative F-box protein At5g50220 (357 aa).

In terms of domain architecture, F-box spans 27–73; that stretch reads IAEDIGIPIDLMVEILKKLPAKSLIKFQCVSKQWSSIIGSSRDFIDS.

The sequence is that of Putative F-box protein At5g50220 from Arabidopsis thaliana (Mouse-ear cress).